Reading from the N-terminus, the 1026-residue chain is Exportin-T (1026 aa).

The protein belongs to the exportin family.

It is found in the nucleus. Its subcellular location is the cytoplasm. Functionally, tRNA nucleus export receptor which facilitates tRNA translocation across the nuclear pore complex. Involved in pre-tRNA splicing, probably by affecting the interaction of pre-tRNA with splicing endonuclease. This Aspergillus oryzae (strain ATCC 42149 / RIB 40) (Yellow koji mold) protein is Exportin-T (los1).